A 178-amino-acid polypeptide reads, in one-letter code: N-alpha-acetyltransferase 20 (178 aa).

The N-acetyltransferase domain maps to 2–157 (TTLRAFTCDD…DAYDMRKALS (156 aa)). The disordered stretch occupies residues 159–178 (DTEKKSIVPLPHPVRPEDIE).

This sequence belongs to the acetyltransferase family. ARD1 subfamily. As to quaternary structure, component of the N-terminal acetyltransferase B (NatB) complex which is composed of naa20 and naa25.

It localises to the cytoplasm. Its subcellular location is the nucleus. The catalysed reaction is N-terminal L-methionyl-L-asparaginyl-[protein] + acetyl-CoA = N-terminal N(alpha)-acetyl-L-methionyl-L-asparaginyl-[protein] + CoA + H(+). It catalyses the reaction N-terminal L-methionyl-L-glutaminyl-[protein] + acetyl-CoA = N-terminal N(alpha)-acetyl-L-methionyl-L-glutaminyl-[protein] + CoA + H(+). It carries out the reaction N-terminal L-methionyl-L-aspartyl-[protein] + acetyl-CoA = N-terminal N(alpha)-acetyl-L-methionyl-L-aspartyl-[protein] + CoA + H(+). The enzyme catalyses N-terminal L-methionyl-L-glutamyl-[protein] + acetyl-CoA = N-terminal N(alpha)-acetyl-L-methionyl-L-glutamyl-[protein] + CoA + H(+). In terms of biological role, catalytic subunit of the NatB complex which catalyzes acetylation of the N-terminal methionine residues of peptides beginning with Met-Asp, Met-Glu, Met-Asn and Met-Gln. Proteins with cell cycle functions are overrepresented in the pool of NatB substrates. Required for maintaining the structure and function of actomyosin fibers and for proper cellular migration. The chain is N-alpha-acetyltransferase 20 (naa20) from Xenopus laevis (African clawed frog).